The sequence spans 898 residues: Serine/threonine-protein kinase TAO3 (898 aa).

One can recognise a Protein kinase domain in the interval 24 to 277 (FVGLHEIGHG…SADLLRHDFV (254 aa)). ATP contacts are provided by residues 30–38 (IGHGSFGAV) and Lys-53. Asp-147 functions as the Proton acceptor in the catalytic mechanism. The interval 316–374 (TRNGPLTESQEEEEDSEHGSNLSRKMDSLGSNHSIPSMSVSTGSQSSSVSSMQEVLDES) is disordered. A compositionally biased stretch (polar residues) spans 334 to 351 (GSNLSRKMDSLGSNHSIP). A compositionally biased stretch (low complexity) spans 352 to 368 (SMSVSTGSQSSSVSSMQ). Coiled-coil stretches lie at residues 452 to 502 (EQEN…THAN), 548 to 649 (FLES…HAML), and 754 to 875 (LKSL…IETF). The segment at 565-596 (EEMNEDHSTPKKEKQERISKHKENLQHTQAEE) is disordered.

The protein belongs to the protein kinase superfamily. STE Ser/Thr protein kinase family. STE20 subfamily.

It is found in the cytoplasm. The protein resides in the cell membrane. It localises to the membrane raft. Its subcellular location is the lipid droplet. It catalyses the reaction L-seryl-[protein] + ATP = O-phospho-L-seryl-[protein] + ADP + H(+). It carries out the reaction L-threonyl-[protein] + ATP = O-phospho-L-threonyl-[protein] + ADP + H(+). Serine/threonine-protein kinase that acts as a regulator of the p38/MAPK14 stress-activated MAPK cascade and of the MAPK8/JNK cascade. In response to DNA damage, involved in the G2/M transition DNA damage checkpoint by activating the p38/MAPK14 stress-activated MAPK cascade, probably by mediating phosphorylation of upstream MAP kinase kinases. Inhibits basal activity of the MAPK8/JNK cascade. The sequence is that of Serine/threonine-protein kinase TAO3 (TAOK3) from Gallus gallus (Chicken).